We begin with the raw amino-acid sequence, 262 residues long: MKVIKTLSIINFFIFVTFNIKNESKYSNTFINNAYNMSIRRSMAESKPPTGTGGSGSAGSGAGASAGNGANPGADAERSPSTPATPATPATTTTTTTTNDAEASTSTSSENPNHKNAETNPKGKGEVQKPNQANKETQNNSNVQQDSQTKSNVPPTQDADTKSPTAQPEQAENSAPTAEQTESPELQSAPENKGTGQHGHMHGSRNNHPQNTSDSQKECTDGNKENCGAATSLLNNSSNIASINKFVVLISATLVLSFAIFI.

The signal sequence occupies residues 1 to 20 (MKVIKTLSIINFFIFVTFNI). 2 N-linked (GlcNAc...) asparagine glycosylation sites follow: N22 and N36. The interval 44–188 (AESKPPTGTG…EQTESPELQS (145 aa)) is polymorphic region. A disordered region spans residues 44 to 223 (AESKPPTGTG…DSQKECTDGN (180 aa)). Over residues 51 to 66 (GTGGSGSAGSGAGASA) the composition is skewed to gly residues. Residues 67 to 111 (GNGANPGADAERSPSTPATPATPATTTTTTTTNDAEASTSTSSEN) are compositionally biased toward low complexity. The segment covering 112–127 (PNHKNAETNPKGKGEV) has biased composition (basic and acidic residues). 2 stretches are compositionally biased toward polar residues: residues 129–155 (KPNQANKETQNNSNVQQDSQTKSNVPP) and 162–190 (KSPTAQPEQAENSAPTAEQTESPELQSAP). Residue N139 is glycosylated (N-linked (GlcNAc...) asparagine). A glycan (N-linked (GlcNAc...) asparagine) is linked at N211. A disulfide bond links C219 and C227. N-linked (GlcNAc...) asparagine glycosylation is found at N235 and N236. N236 carries the GPI-anchor amidated asparagine lipid modification. Positions 237-262 (SSNIASINKFVVLISATLVLSFAIFI) are cleaved as a propeptide — removed in mature form.

It is found in the cell membrane. Its function is as follows. May play a role in the merozoite attachment to the erythrocyte. The chain is Merozoite surface protein 2 from Plasmodium falciparum (isolate Camp / Malaysia).